We begin with the raw amino-acid sequence, 474 residues long: Glutamate--tRNA ligase (474 aa).

The 'HIGH' region motif lies at 9 to 19 (PSPTGYLHVGG). Positions 240 to 244 (KLSKR) match the 'KMSKS' region motif. Lysine 243 contributes to the ATP binding site.

This sequence belongs to the class-I aminoacyl-tRNA synthetase family. Glutamate--tRNA ligase type 1 subfamily. As to quaternary structure, monomer.

Its subcellular location is the cytoplasm. The enzyme catalyses tRNA(Glu) + L-glutamate + ATP = L-glutamyl-tRNA(Glu) + AMP + diphosphate. Its function is as follows. Catalyzes the attachment of glutamate to tRNA(Glu) in a two-step reaction: glutamate is first activated by ATP to form Glu-AMP and then transferred to the acceptor end of tRNA(Glu). This chain is Glutamate--tRNA ligase, found in Aliivibrio fischeri (strain MJ11) (Vibrio fischeri).